The following is a 677-amino-acid chain: DNA-directed RNA polymerase subunit beta' (677 aa).

Positions 69, 71, 87, and 90 each coordinate Zn(2+). 3 residues coordinate Mg(2+): Asp489, Asp491, and Asp493.

It belongs to the RNA polymerase beta' chain family. RpoC1 subfamily. In plastids the minimal PEP RNA polymerase catalytic core is composed of four subunits: alpha, beta, beta', and beta''. When a (nuclear-encoded) sigma factor is associated with the core the holoenzyme is formed, which can initiate transcription. The cofactor is Mg(2+). Zn(2+) is required as a cofactor.

It localises to the plastid. The protein resides in the chloroplast. It carries out the reaction RNA(n) + a ribonucleoside 5'-triphosphate = RNA(n+1) + diphosphate. Functionally, DNA-dependent RNA polymerase catalyzes the transcription of DNA into RNA using the four ribonucleoside triphosphates as substrates. The polypeptide is DNA-directed RNA polymerase subunit beta' (Spinacia oleracea (Spinach)).